The chain runs to 210 residues: Thymidylate kinase (210 aa).

10–17 (GPEGAGKS) lines the ATP pocket.

The protein belongs to the thymidylate kinase family.

It carries out the reaction dTMP + ATP = dTDP + ADP. Its function is as follows. Phosphorylation of dTMP to form dTDP in both de novo and salvage pathways of dTTP synthesis. The sequence is that of Thymidylate kinase from Pseudomonas entomophila (strain L48).